We begin with the raw amino-acid sequence, 375 residues long: Chaperone protein DnaJ (375 aa).

The J domain occupies 5 to 70; sequence DYYSLLEVER…QKRAAYDRYG (66 aa). The segment at 135–213 adopts a CR-type zinc-finger fold; it reads GKTVDIEIDV…CHGEGRCEKH (79 aa). C148, C151, C165, C168, C187, C190, C201, and C204 together coordinate Zn(2+). CXXCXGXG motif repeat units lie at residues 148-155, 165-172, 187-194, and 201-208; these read CDACHGSG, CDTCHGSG, CPVCQGKG, and CPECHGEG.

The protein belongs to the DnaJ family. As to quaternary structure, homodimer. Zn(2+) is required as a cofactor.

The protein localises to the cytoplasm. In terms of biological role, participates actively in the response to hyperosmotic and heat shock by preventing the aggregation of stress-denatured proteins and by disaggregating proteins, also in an autonomous, DnaK-independent fashion. Unfolded proteins bind initially to DnaJ; upon interaction with the DnaJ-bound protein, DnaK hydrolyzes its bound ATP, resulting in the formation of a stable complex. GrpE releases ADP from DnaK; ATP binding to DnaK triggers the release of the substrate protein, thus completing the reaction cycle. Several rounds of ATP-dependent interactions between DnaJ, DnaK and GrpE are required for fully efficient folding. Also involved, together with DnaK and GrpE, in the DNA replication of plasmids through activation of initiation proteins. This is Chaperone protein DnaJ from Zymomonas mobilis subsp. mobilis (strain ATCC 31821 / ZM4 / CP4).